The chain runs to 238 residues: Small ribosomal subunit protein uS3 (238 aa).

One can recognise a KH type-2 domain in the interval 39–109; it reads IRTFINQQLA…TIKVNVVEVN (71 aa). The segment at 215 to 238 is disordered; the sequence is EAVPREATRRSPQRRLPQFENRSN.

It belongs to the universal ribosomal protein uS3 family. In terms of assembly, part of the 30S ribosomal subunit. Forms a tight complex with proteins S10 and S14.

Functionally, binds the lower part of the 30S subunit head. Binds mRNA in the 70S ribosome, positioning it for translation. This is Small ribosomal subunit protein uS3 from Thermosynechococcus vestitus (strain NIES-2133 / IAM M-273 / BP-1).